We begin with the raw amino-acid sequence, 361 residues long: Probable dual-specificity RNA methyltransferase RlmN (361 aa).

Glu91 functions as the Proton acceptor in the catalytic mechanism. One can recognise a Radical SAM core domain in the interval 97–329 (QHYGLSVCVT…KKKGVNCVVR (233 aa)). Cys104 and Cys340 are joined by a disulfide. [4Fe-4S] cluster contacts are provided by Cys111, Cys115, and Cys118. S-adenosyl-L-methionine contacts are provided by residues 163–164 (GE), Ser195, 218–220 (SLH), and Asn296. Cys340 functions as the S-methylcysteine intermediate in the catalytic mechanism.

It belongs to the radical SAM superfamily. RlmN family. [4Fe-4S] cluster serves as cofactor.

The protein localises to the cytoplasm. The catalysed reaction is adenosine(2503) in 23S rRNA + 2 reduced [2Fe-2S]-[ferredoxin] + 2 S-adenosyl-L-methionine = 2-methyladenosine(2503) in 23S rRNA + 5'-deoxyadenosine + L-methionine + 2 oxidized [2Fe-2S]-[ferredoxin] + S-adenosyl-L-homocysteine. It catalyses the reaction adenosine(37) in tRNA + 2 reduced [2Fe-2S]-[ferredoxin] + 2 S-adenosyl-L-methionine = 2-methyladenosine(37) in tRNA + 5'-deoxyadenosine + L-methionine + 2 oxidized [2Fe-2S]-[ferredoxin] + S-adenosyl-L-homocysteine. Specifically methylates position 2 of adenine 2503 in 23S rRNA and position 2 of adenine 37 in tRNAs. This Streptococcus pneumoniae serotype 4 (strain ATCC BAA-334 / TIGR4) protein is Probable dual-specificity RNA methyltransferase RlmN.